The sequence spans 450 residues: Tubulin alpha-2 chain (450 aa).

The GTP site is built by Gln11, Glu71, Gly144, Thr145, Thr179, Asn206, and Asn228. Glu71 is a binding site for Mg(2+). Residue Glu254 is part of the active site. Residue Thr349 is modified to Phosphothreonine. The segment at 430 to 450 (KDYEEVGAEGGDDEDDEGEEY) is disordered. The segment covering 431 to 450 (DYEEVGAEGGDDEDDEGEEY) has biased composition (acidic residues).

It belongs to the tubulin family. Dimer of alpha and beta chains. A typical microtubule is a hollow water-filled tube with an outer diameter of 25 nm and an inner diameter of 15 nM. Alpha-beta heterodimers associate head-to-tail to form protofilaments running lengthwise along the microtubule wall with the beta-tubulin subunit facing the microtubule plus end conferring a structural polarity. Microtubules usually have 13 protofilaments but different protofilament numbers can be found in some organisms and specialized cells. Mg(2+) serves as cofactor. Undergoes a tyrosination/detyrosination cycle, the cyclic removal and re-addition of a C-terminal tyrosine residue by the enzymes tubulin tyrosine carboxypeptidase (TTCP) and tubulin tyrosine ligase (TTL), respectively. In terms of processing, acetylation of alpha chains at Lys-40 stabilizes microtubules and affects affinity and processivity of microtubule motors. This modification has a role in multiple cellular functions, ranging from cell motility, cell cycle progression or cell differentiation to intracellular trafficking and signaling.

The protein localises to the cytoplasm. It localises to the cytoskeleton. It catalyses the reaction GTP + H2O = GDP + phosphate + H(+). Tubulin is the major constituent of microtubules, a cylinder consisting of laterally associated linear protofilaments composed of alpha- and beta-tubulin heterodimers. Microtubules grow by the addition of GTP-tubulin dimers to the microtubule end, where a stabilizing cap forms. Below the cap, tubulin dimers are in GDP-bound state, owing to GTPase activity of alpha-tubulin. The sequence is that of Tubulin alpha-2 chain (TUBA2) from Arabidopsis thaliana (Mouse-ear cress).